A 216-amino-acid polypeptide reads, in one-letter code: Pyrophosphatase PpaX (216 aa).

Aspartate 9 serves as the catalytic Nucleophile.

This sequence belongs to the HAD-like hydrolase superfamily. PpaX family. Mg(2+) serves as cofactor.

The catalysed reaction is diphosphate + H2O = 2 phosphate + H(+). Its function is as follows. Hydrolyzes pyrophosphate formed during P-Ser-HPr dephosphorylation by HPrK/P. Might play a role in controlling the intracellular pyrophosphate pool. This is Pyrophosphatase PpaX from Bacillus thuringiensis (strain Al Hakam).